The sequence spans 108 residues: Protein YcgL (108 aa).

In terms of domain architecture, YcgL spans 12-96 (MFCVIYRSSK…PPEDLLKQHL (85 aa)).

This chain is Protein YcgL, found in Escherichia coli (strain K12 / MC4100 / BW2952).